The primary structure comprises 209 residues: Uracil phosphoribosyltransferase (209 aa).

Residues R79, R104, and 131–139 contribute to the 5-phospho-alpha-D-ribose 1-diphosphate site; that span reads DPMLATGAS. Uracil is bound by residues I194 and 199–201; that span reads GDA. D200 provides a ligand contact to 5-phospho-alpha-D-ribose 1-diphosphate.

This sequence belongs to the UPRTase family. The cofactor is Mg(2+).

It catalyses the reaction UMP + diphosphate = 5-phospho-alpha-D-ribose 1-diphosphate + uracil. It functions in the pathway pyrimidine metabolism; UMP biosynthesis via salvage pathway; UMP from uracil: step 1/1. With respect to regulation, allosterically activated by GTP. Catalyzes the conversion of uracil and 5-phospho-alpha-D-ribose 1-diphosphate (PRPP) to UMP and diphosphate. In Staphylococcus aureus (strain JH1), this protein is Uracil phosphoribosyltransferase.